Consider the following 506-residue polypeptide: Glucan endo-1,3-beta-glucosidase 13 (506 aa).

A signal peptide spans 1 to 22 (MARDFKLIFSISILLLLLDCCY). Asn-70 carries N-linked (GlcNAc...) asparagine glycosylation. Glu-119 acts as the Proton donor in catalysis. Residues Asn-127, Asn-175, and Asn-212 are each glycosylated (N-linked (GlcNAc...) asparagine). Residue Glu-264 is the Nucleophile of the active site. 2 N-linked (GlcNAc...) asparagine glycosylation sites follow: Asn-356 and Asn-361. Cysteines 370 and 433 form a disulfide. Residues Asn-459 and Asn-465 are each glycosylated (N-linked (GlcNAc...) asparagine). A lipid anchor (GPI-anchor amidated serine) is attached at Ser-471. Positions 472–506 (SASTPRGNELLQWILKLCLMISLFFSLQTMNSQAL) are cleaved as a propeptide — removed in mature form.

It belongs to the glycosyl hydrolase 17 family. Contains two additional disulfide bonds.

The protein resides in the secreted. It localises to the cell wall. Its subcellular location is the cell membrane. It carries out the reaction Hydrolysis of (1-&gt;3)-beta-D-glucosidic linkages in (1-&gt;3)-beta-D-glucans.. The sequence is that of Glucan endo-1,3-beta-glucosidase 13 from Arabidopsis thaliana (Mouse-ear cress).